The following is a 77-amino-acid chain: Defensin-like protein 1 (77 aa).

The signal sequence occupies residues 1–30 (MKLSVRFISAALLLFMVFIATGMGPVTVEA). 4 disulfide bridges follow: cysteine 33-cysteine 77, cysteine 44-cysteine 64, cysteine 50-cysteine 71, and cysteine 54-cysteine 73.

This sequence belongs to the DEFL family. In terms of tissue distribution, expressed in the whole plant except roots.

It is found in the secreted. Confers broad-spectrum resistance to pathogens. This chain is Defensin-like protein 1 (PDF2.3), found in Arabidopsis thaliana (Mouse-ear cress).